We begin with the raw amino-acid sequence, 479 residues long: MSHNLKQLFQQHKVKGLSINSKTVKDKDVFFAIKGRNTDGNAFIKDALSKGAVLVITDNKKNIVIDKVIYVKDVQAALHEAIEIFYPKKPKNLIAVTGTNGKSSVVSYIAQTHSLLGKKAASIGTIGVEIFGCDNLINDVPELTTLDYLSFRKIAHNLAENGIEYLVFEASSHGLDQARLREIKVNIACFTSFSQDHLDYHHTKENYLLAKLKLFINHLLPNGIAILNSDIEEIEFVKDYLHNHNIKFITVGKKGDLEITRINCSLKGQNINFTFNNREYNFNTPIIGSFQASNLLIAVLSMHYTGFAFDDVIDSLVEVKAVKGRMERIDNTNIFVDYAHTPDALEKALTELKNIKLHDSKLSVVFGCGGNRDKAKRSLMGQMAAKRADTIIITDDNPRNEDPKLIRAEIISGIEKADYTEIANREEAIKYGINNLKQDDILLVAGKGHENYQIIGDKKLPFDDAEVVRKCVKVCHPVA.

Residue S21 participates in UDP-N-acetyl-alpha-D-muramoyl-L-alanyl-D-glutamate binding. 98–104 (GTNGKSS) contacts ATP. Residues 144–145 (TT), S171, Q177, and R179 contribute to the UDP-N-acetyl-alpha-D-muramoyl-L-alanyl-D-glutamate site. K211 is subject to N6-carboxylysine. Residues R372, 396-399 (DNPR), G446, and E450 contribute to the meso-2,6-diaminopimelate site. The short motif at 396 to 399 (DNPR) is the Meso-diaminopimelate recognition motif element.

This sequence belongs to the MurCDEF family. MurE subfamily. Mg(2+) serves as cofactor. Post-translationally, carboxylation is probably crucial for Mg(2+) binding and, consequently, for the gamma-phosphate positioning of ATP.

It is found in the cytoplasm. The catalysed reaction is UDP-N-acetyl-alpha-D-muramoyl-L-alanyl-D-glutamate + meso-2,6-diaminopimelate + ATP = UDP-N-acetyl-alpha-D-muramoyl-L-alanyl-gamma-D-glutamyl-meso-2,6-diaminopimelate + ADP + phosphate + H(+). Its pathway is cell wall biogenesis; peptidoglycan biosynthesis. In terms of biological role, catalyzes the addition of meso-diaminopimelic acid to the nucleotide precursor UDP-N-acetylmuramoyl-L-alanyl-D-glutamate (UMAG) in the biosynthesis of bacterial cell-wall peptidoglycan. This Rickettsia montanensis protein is UDP-N-acetylmuramoyl-L-alanyl-D-glutamate--2,6-diaminopimelate ligase.